The following is a 502-amino-acid chain: Acetyl-coenzyme A carboxylase carboxyl transferase subunit beta, chloroplastic (502 aa).

The span at 191 to 202 (GSDSESSSIRTS) shows a compositional bias: low complexity. A disordered region spans residues 191–212 (GSDSESSSIRTSGNDSNFNVRE). The CoA carboxyltransferase N-terminal domain occupies 226-497 (LWVQCENCYE…NQNSSGARGS (272 aa)). Zn(2+) is bound by residues cysteine 230, cysteine 233, cysteine 249, and cysteine 252. Residues 230–252 (CENCYELNYRSFFRSKMNICEQC) form a C4-type zinc finger.

It belongs to the AccD/PCCB family. As to quaternary structure, acetyl-CoA carboxylase is a heterohexamer composed of biotin carboxyl carrier protein, biotin carboxylase and 2 subunits each of ACCase subunit alpha and ACCase plastid-coded subunit beta (accD). Zn(2+) serves as cofactor.

Its subcellular location is the plastid. It localises to the chloroplast stroma. The catalysed reaction is N(6)-carboxybiotinyl-L-lysyl-[protein] + acetyl-CoA = N(6)-biotinyl-L-lysyl-[protein] + malonyl-CoA. Its pathway is lipid metabolism; malonyl-CoA biosynthesis; malonyl-CoA from acetyl-CoA: step 1/1. Component of the acetyl coenzyme A carboxylase (ACC) complex. Biotin carboxylase (BC) catalyzes the carboxylation of biotin on its carrier protein (BCCP) and then the CO(2) group is transferred by the transcarboxylase to acetyl-CoA to form malonyl-CoA. The sequence is that of Acetyl-coenzyme A carboxylase carboxyl transferase subunit beta, chloroplastic from Chloranthus spicatus (Chulantree).